The following is a 483-amino-acid chain: Regulatory protein ViaA (483 aa).

Belongs to the ViaA family. In terms of assembly, homodimer. Interacts with RavA.

The protein localises to the cytoplasm. Its function is as follows. Component of the RavA-ViaA chaperone complex, which may act on the membrane to optimize the function of some of the respiratory chains. ViaA stimulates the ATPase activity of RavA. The protein is Regulatory protein ViaA of Salmonella arizonae (strain ATCC BAA-731 / CDC346-86 / RSK2980).